Here is a 555-residue protein sequence, read N- to C-terminus: Glutamine--tRNA ligase (555 aa).

The 'HIGH' region signature appears at 34–44; the sequence is PEPNGYLHIGH. ATP-binding positions include 35 to 37 and 41 to 47; these read EPN and HIGHAKS. L-glutamine contacts are provided by D67 and Y212. Residues T231, 261 to 262, and 269 to 271 contribute to the ATP site; these read RL and MSK. Residues 268 to 272 carry the 'KMSKS' region motif; the sequence is VMSKR. Positions 317–324 are interaction with tRNA; sequence TKQDNTIE.

This sequence belongs to the class-I aminoacyl-tRNA synthetase family. Monomer.

It is found in the cytoplasm. It catalyses the reaction tRNA(Gln) + L-glutamine + ATP = L-glutaminyl-tRNA(Gln) + AMP + diphosphate. This chain is Glutamine--tRNA ligase, found in Salmonella paratyphi B (strain ATCC BAA-1250 / SPB7).